Here is a 677-residue protein sequence, read N- to C-terminus: Methionine--tRNA ligase (677 aa).

Residues 15 to 25 (PYANGSIHLGH) carry the 'HIGH' region motif. The Zn(2+) site is built by Cys-146, Cys-149, Cys-159, and Cys-162. The short motif at 333–337 (KMSKS) is the 'KMSKS' region element. Lys-336 provides a ligand contact to ATP. Positions 575–677 (DFAKVDLRVA…AGAKPGHQVK (103 aa)) constitute a tRNA-binding domain.

The protein belongs to the class-I aminoacyl-tRNA synthetase family. MetG type 1 subfamily. Homodimer. The cofactor is Zn(2+).

It localises to the cytoplasm. It catalyses the reaction tRNA(Met) + L-methionine + ATP = L-methionyl-tRNA(Met) + AMP + diphosphate. Is required not only for elongation of protein synthesis but also for the initiation of all mRNA translation through initiator tRNA(fMet) aminoacylation. This chain is Methionine--tRNA ligase, found in Shigella boydii serotype 18 (strain CDC 3083-94 / BS512).